We begin with the raw amino-acid sequence, 132 residues long: Large-conductance mechanosensitive channel (132 aa).

A run of 3 helical transmembrane segments spans residues 14-34, 38-58, and 67-87; these read VVDL…VSSL, IITP…LHFG, and GNFI…FMFI.

Belongs to the MscL family. Homopentamer.

Its subcellular location is the cell membrane. Channel that opens in response to stretch forces in the membrane lipid bilayer. May participate in the regulation of osmotic pressure changes within the cell. This Bacillus cereus (strain G9842) protein is Large-conductance mechanosensitive channel.